Consider the following 161-residue polypeptide: 3-isopropylmalate dehydratase small subunit (161 aa).

This sequence belongs to the LeuD family. LeuD type 2 subfamily. Heterodimer of LeuC and LeuD.

The catalysed reaction is (2R,3S)-3-isopropylmalate = (2S)-2-isopropylmalate. It functions in the pathway amino-acid biosynthesis; L-leucine biosynthesis; L-leucine from 3-methyl-2-oxobutanoate: step 2/4. Its function is as follows. Catalyzes the isomerization between 2-isopropylmalate and 3-isopropylmalate, via the formation of 2-isopropylmaleate. This chain is 3-isopropylmalate dehydratase small subunit, found in Metallosphaera sedula (strain ATCC 51363 / DSM 5348 / JCM 9185 / NBRC 15509 / TH2).